A 294-amino-acid chain; its full sequence is MLNQTTAAQKAQTLAEALPYIKRFFDKTIVIKYGGNAMTDPHLKECFASDVVLLKLVGMNPVVVHGGGPQINELLDKLGKKGEFIQGMRVTDEETMDIVEMVLGGQVNKEIVNLINRNGGKAVGLTGQDGNFIHARKLLVQDLQNPSNMIDIGQVGEISGIDPSLIQFLDSGDFIPVIAPIGVGIDGQTYNINADVVAGKLAEVLGAEKLILLTNTPGVLDKTGQLLTGLTPKQIDDLVADGTLSGGMLPKISSALDAARSGVKSVHIIDGRVEHALLLEVLTDAGVGTLITAK.

Residues 67–68, Arg89, and Asn191 contribute to the substrate site; that span reads GG.

This sequence belongs to the acetylglutamate kinase family. ArgB subfamily.

Its subcellular location is the cytoplasm. It carries out the reaction N-acetyl-L-glutamate + ATP = N-acetyl-L-glutamyl 5-phosphate + ADP. The protein operates within amino-acid biosynthesis; L-arginine biosynthesis; N(2)-acetyl-L-ornithine from L-glutamate: step 2/4. Catalyzes the ATP-dependent phosphorylation of N-acetyl-L-glutamate. This Methylobacillus flagellatus (strain ATCC 51484 / DSM 6875 / VKM B-1610 / KT) protein is Acetylglutamate kinase.